Consider the following 400-residue polypeptide: CCA-adding enzyme (400 aa).

The ATP site is built by G27 and R30. 2 residues coordinate CTP: G27 and R30. Positions 40 and 42 each coordinate Mg(2+). 5 residues coordinate ATP: R111, D154, R157, R160, and R163. CTP is bound by residues R111, D154, R157, R160, and R163.

Belongs to the tRNA nucleotidyltransferase/poly(A) polymerase family. Bacterial CCA-adding enzyme type 3 subfamily. As to quaternary structure, homodimer. It depends on Mg(2+) as a cofactor.

The catalysed reaction is a tRNA precursor + 2 CTP + ATP = a tRNA with a 3' CCA end + 3 diphosphate. The enzyme catalyses a tRNA with a 3' CCA end + 2 CTP + ATP = a tRNA with a 3' CCACCA end + 3 diphosphate. Its function is as follows. Catalyzes the addition and repair of the essential 3'-terminal CCA sequence in tRNAs without using a nucleic acid template. Adds these three nucleotides in the order of C, C, and A to the tRNA nucleotide-73, using CTP and ATP as substrates and producing inorganic pyrophosphate. tRNA 3'-terminal CCA addition is required both for tRNA processing and repair. Also involved in tRNA surveillance by mediating tandem CCA addition to generate a CCACCA at the 3' terminus of unstable tRNAs. While stable tRNAs receive only 3'-terminal CCA, unstable tRNAs are marked with CCACCA and rapidly degraded. This Bacillus pumilus (strain SAFR-032) protein is CCA-adding enzyme.